The sequence spans 111 residues: Universal stress protein B (111 aa).

2 consecutive transmembrane segments (helical) span residues 1–21 (MISTVALFWALCVVCIVNMAR) and 90–110 (FILTSALCGLVVVSLIALMIW).

It belongs to the universal stress protein B family.

The protein localises to the cell inner membrane. This chain is Universal stress protein B, found in Escherichia coli O45:K1 (strain S88 / ExPEC).